Consider the following 227-residue polypeptide: NADH-quinone oxidoreductase subunit C (227 aa).

Belongs to the complex I 30 kDa subunit family. In terms of assembly, NDH-1 is composed of 14 different subunits. Subunits NuoB, C, D, E, F, and G constitute the peripheral sector of the complex.

The protein resides in the cell inner membrane. The catalysed reaction is a quinone + NADH + 5 H(+)(in) = a quinol + NAD(+) + 4 H(+)(out). Its function is as follows. NDH-1 shuttles electrons from NADH, via FMN and iron-sulfur (Fe-S) centers, to quinones in the respiratory chain. The immediate electron acceptor for the enzyme in this species is believed to be ubiquinone. Couples the redox reaction to proton translocation (for every two electrons transferred, four hydrogen ions are translocated across the cytoplasmic membrane), and thus conserves the redox energy in a proton gradient. The chain is NADH-quinone oxidoreductase subunit C from Coxiella burnetii (strain RSA 331 / Henzerling II).